Reading from the N-terminus, the 315-residue chain is HPr kinase/phosphorylase (315 aa).

Active-site residues include H140 and K161. 155-162 (GDSGVGKS) lines the ATP pocket. S162 contacts Mg(2+). D179 functions as the Proton acceptor; for phosphorylation activity. Proton donor; for dephosphorylation activity in the catalytic mechanism. The tract at residues 203 to 212 (LEIRGIGIID) is important for the catalytic mechanism of both phosphorylation and dephosphorylation. E204 lines the Mg(2+) pocket. R245 is an active-site residue. The interval 266-271 (PVKTGR) is important for the catalytic mechanism of dephosphorylation.

This sequence belongs to the HPrK/P family. Homohexamer. Mg(2+) serves as cofactor.

It catalyses the reaction [HPr protein]-L-serine + ATP = [HPr protein]-O-phospho-L-serine + ADP + H(+). The catalysed reaction is [HPr protein]-O-phospho-L-serine + phosphate + H(+) = [HPr protein]-L-serine + diphosphate. In terms of biological role, catalyzes the ATP- as well as the pyrophosphate-dependent phosphorylation of a specific serine residue in HPr, a phosphocarrier protein of the phosphoenolpyruvate-dependent sugar phosphotransferase system (PTS). HprK/P also catalyzes the pyrophosphate-producing, inorganic phosphate-dependent dephosphorylation (phosphorolysis) of seryl-phosphorylated HPr (P-Ser-HPr). The two antagonistic activities of HprK/P are regulated by several intracellular metabolites, which change their concentration in response to the absence or presence of rapidly metabolisable carbon sources (glucose, fructose, etc.) in the growth medium. Therefore, by controlling the phosphorylation state of HPr, HPrK/P is a sensor enzyme that plays a major role in the regulation of carbon metabolism and sugar transport: it mediates carbon catabolite repression (CCR), and regulates PTS-catalyzed carbohydrate uptake and inducer exclusion. This Lactiplantibacillus plantarum (strain ATCC BAA-793 / NCIMB 8826 / WCFS1) (Lactobacillus plantarum) protein is HPr kinase/phosphorylase.